The primary structure comprises 198 residues: Small ribosomal subunit protein uS4 (198 aa).

Residues 91 to 151 form the S4 RNA-binding domain; the sequence is SRLDNIVYRL…EKSKNLKIVE (61 aa).

This sequence belongs to the universal ribosomal protein uS4 family. Part of the 30S ribosomal subunit. Contacts protein S5. The interaction surface between S4 and S5 is involved in control of translational fidelity.

One of the primary rRNA binding proteins, it binds directly to 16S rRNA where it nucleates assembly of the body of the 30S subunit. Functionally, with S5 and S12 plays an important role in translational accuracy. The sequence is that of Small ribosomal subunit protein uS4 from Phytoplasma australiense.